The sequence spans 344 residues: tRNA N6-adenosine threonylcarbamoyltransferase (344 aa).

H111 and H115 together coordinate Fe cation. Residues 134–138 (LVSGG), D167, G180, and N272 each bind substrate. Residue D300 coordinates Fe cation.

It belongs to the KAE1 / TsaD family. Requires Fe(2+) as cofactor.

It localises to the cytoplasm. The catalysed reaction is L-threonylcarbamoyladenylate + adenosine(37) in tRNA = N(6)-L-threonylcarbamoyladenosine(37) in tRNA + AMP + H(+). Functionally, required for the formation of a threonylcarbamoyl group on adenosine at position 37 (t(6)A37) in tRNAs that read codons beginning with adenine. Is involved in the transfer of the threonylcarbamoyl moiety of threonylcarbamoyl-AMP (TC-AMP) to the N6 group of A37, together with TsaE and TsaB. TsaD likely plays a direct catalytic role in this reaction. The polypeptide is tRNA N6-adenosine threonylcarbamoyltransferase (Idiomarina loihiensis (strain ATCC BAA-735 / DSM 15497 / L2-TR)).